The primary structure comprises 65 residues: Alpha-toxin Bot1 (65 aa).

The region spanning 2–64 is the LCN-type CS-alpha/beta domain; it reads RDAYIAQPEN…VPIRIPGKCH (63 aa). Intrachain disulfides connect cysteine 12–cysteine 63, cysteine 16–cysteine 36, cysteine 22–cysteine 46, and cysteine 26–cysteine 48. The residue at position 65 (phenylalanine 65) is a Phenylalanine amide.

Belongs to the long (4 C-C) scorpion toxin superfamily. Sodium channel inhibitor family. Alpha subfamily. In terms of tissue distribution, expressed by the venom gland.

It is found in the secreted. Its function is as follows. Alpha toxins bind voltage-independently at site-3 of sodium channels (Nav) and inhibit the inactivation of the activated channels, thereby blocking neuronal transmission. This chain is Alpha-toxin Bot1, found in Buthus occitanus tunetanus (Common European scorpion).